Consider the following 175-residue polypeptide: Large ribosomal subunit protein uL10 (175 aa).

It belongs to the universal ribosomal protein uL10 family. In terms of assembly, part of the ribosomal stalk of the 50S ribosomal subunit. The N-terminus interacts with L11 and the large rRNA to form the base of the stalk. The C-terminus forms an elongated spine to which L12 dimers bind in a sequential fashion forming a multimeric L10(L12)X complex.

Forms part of the ribosomal stalk, playing a central role in the interaction of the ribosome with GTP-bound translation factors. The polypeptide is Large ribosomal subunit protein uL10 (Psychrobacter sp. (strain PRwf-1)).